Here is a 146-residue protein sequence, read N- to C-terminus: Large ribosomal subunit protein eL28 (146 aa).

The interval 123 to 146 (VRAARKERSSKITFQRKAVRPKRH) is disordered.

Belongs to the eukaryotic ribosomal protein eL28 family.

The sequence is that of Large ribosomal subunit protein eL28 from Trypanosoma cruzi.